A 200-amino-acid chain; its full sequence is Pyrrolidone-carboxylate peptidase (200 aa).

Catalysis depends on residues Glu78, Cys141, and His165.

It belongs to the peptidase C15 family. In terms of assembly, homotetramer.

The protein localises to the cytoplasm. The enzyme catalyses Release of an N-terminal pyroglutamyl group from a polypeptide, the second amino acid generally not being Pro.. Removes 5-oxoproline from various penultimate amino acid residues except L-proline. The polypeptide is Pyrrolidone-carboxylate peptidase (Thermococcus onnurineus (strain NA1)).